The primary structure comprises 86 residues: Large ribosomal subunit protein bL31B (86 aa).

Belongs to the bacterial ribosomal protein bL31 family. Type B subfamily. Part of the 50S ribosomal subunit.

The sequence is that of Large ribosomal subunit protein bL31B from Streptococcus equi subsp. zooepidemicus (strain H70).